The chain runs to 976 residues: R3H domain-containing protein 2 (976 aa).

Disordered regions lie at residues isoleucine 32–asparagine 71 and isoleucine 105–threonine 147. Residues proline 36–arginine 56 are compositionally biased toward basic and acidic residues. Position 37 is a phosphoserine (serine 37). The segment covering threonine 58–asparagine 71 has biased composition (basic residues). Residues serine 109–serine 143 show a composition bias toward basic and acidic residues. The residue at position 143 (serine 143) is a Phosphoserine. Residues arginine 169–threonine 232 enclose the R3H domain. Positions arginine 233 to serine 310 constitute an SUZ domain. Basic and acidic residues predominate over residues leucine 257–asparagine 269. 5 disordered regions span residues leucine 257–proline 376, cysteine 401–aspartate 457, alanine 480–glutamine 560, glycine 661–valine 725, and arginine 738–serine 780. Low complexity predominate over residues serine 306 to aspartate 317. A phosphoserine mark is found at serine 330, serine 333, and serine 349. Residues cysteine 401–proline 415 are compositionally biased toward low complexity. 2 stretches are compositionally biased toward polar residues: residues proline 441–threonine 453 and alanine 480–leucine 504. The segment covering serine 543–glutamine 560 has biased composition (low complexity). A compositionally biased stretch (pro residues) spans serine 682–methionine 691. Residues proline 692–asparagine 714 show a composition bias toward low complexity. Positions proline 748–methionine 758 are enriched in polar residues. Over residues serine 759–serine 777 the composition is skewed to low complexity. Phosphoserine occurs at positions 853 and 855. Phosphothreonine occurs at positions 856 and 860.

Its subcellular location is the nucleus. This is R3H domain-containing protein 2 (R3HDM2) from Homo sapiens (Human).